A 122-amino-acid polypeptide reads, in one-letter code: Ribosome-binding factor A (122 aa).

The protein belongs to the RbfA family. Monomer. Binds 30S ribosomal subunits, but not 50S ribosomal subunits or 70S ribosomes.

It localises to the cytoplasm. Functionally, one of several proteins that assist in the late maturation steps of the functional core of the 30S ribosomal subunit. Associates with free 30S ribosomal subunits (but not with 30S subunits that are part of 70S ribosomes or polysomes). Required for efficient processing of 16S rRNA. May interact with the 5'-terminal helix region of 16S rRNA. This is Ribosome-binding factor A from Pelagibacter ubique (strain HTCC1062).